A 490-amino-acid polypeptide reads, in one-letter code: Cysteine--tRNA ligase (490 aa).

Cys43 lines the Zn(2+) pocket. The 'HIGH' region motif lies at 45–55 (MTVQSSPHLGH). The disordered stretch occupies residues 177–204 (VDEMSPAEDSDPRGKRDPRDFALWKGHK). Residues 186–204 (SDPRGKRDPRDFALWKGHK) are compositionally biased toward basic and acidic residues. The Zn(2+) site is built by Cys228, His253, and Glu257. A 'KMSKS' region motif is present at residues 284 to 288 (KMSKS). Lys287 contacts ATP.

The protein belongs to the class-I aminoacyl-tRNA synthetase family. As to quaternary structure, monomer. The cofactor is Zn(2+).

The protein localises to the cytoplasm. It catalyses the reaction tRNA(Cys) + L-cysteine + ATP = L-cysteinyl-tRNA(Cys) + AMP + diphosphate. This Cutibacterium acnes (strain DSM 16379 / KPA171202) (Propionibacterium acnes) protein is Cysteine--tRNA ligase.